Reading from the N-terminus, the 139-residue chain is Diacylglycerol acyltransferase/mycolyltransferase Ag85A (139 aa).

Ser10 functions as the Nucleophile in the catalytic mechanism. Residues Ser10 and Asp38 each coordinate substrate. Glu114 is a catalytic residue. Substrate is bound by residues 116 to 119 and Lys123; that span reads FVRT.

This sequence belongs to the mycobacterial A85 antigen family. Homodimer.

The protein resides in the secreted. It localises to the cell wall. The protein localises to the cytoplasm. It catalyses the reaction an acyl-CoA + a 1,2-diacyl-sn-glycerol = a triacyl-sn-glycerol + CoA. It carries out the reaction 2 alpha,alpha'-trehalose 6-mycolate = alpha,alpha'-trehalose 6,6'-bismycolate + alpha,alpha-trehalose. Its function is as follows. The antigen 85 proteins (FbpA, FbpB, FbpC) are responsible for the high affinity of mycobacteria for fibronectin, a large adhesive glycoprotein, which facilitates the attachment of M.tuberculosis to murine alveolar macrophages (AMs). They also help to maintain the integrity of the cell wall by catalyzing the transfer of mycolic acids to cell wall arabinogalactan, and through the synthesis of alpha,alpha-trehalose dimycolate (TDM, cord factor). They catalyze the transfer of a mycoloyl residue from one molecule of alpha,alpha-trehalose monomycolate (TMM) to another TMM, leading to the formation of TDM. FbpA mediates triacylglycerol (TAG) formation with long-chain acyl-CoA as the acyl donor and 1,2-dipalmitoyl-sn-glycerol (1,2-dipalmitin) as the acyl acceptor. It has a preference for C26:0-CoA over C18:1-CoA. The protein is Diacylglycerol acyltransferase/mycolyltransferase Ag85A (fbpA) of Mycobacterium marinum.